The sequence spans 275 residues: Phosphate import ATP-binding protein PstB 3 (275 aa).

The segment at 1 to 26 (MATQETDDSLISTDVQTDATERGDQP) is disordered. Over residues 9 to 18 (SLISTDVQTD) the composition is skewed to polar residues. The 240-residue stretch at 31 to 270 (VETKHLDVHY…PEDDRVEDYI (240 aa)) folds into the ABC transporter domain. 63–70 (GPSGCGKS) is a binding site for ATP.

Belongs to the ABC transporter superfamily. Phosphate importer (TC 3.A.1.7) family. As to quaternary structure, the complex is composed of two ATP-binding proteins (PstB), two transmembrane proteins (PstC and PstA) and a solute-binding protein (PstS).

It is found in the cell membrane. It carries out the reaction phosphate(out) + ATP + H2O = ADP + 2 phosphate(in) + H(+). In terms of biological role, part of the ABC transporter complex PstSACB involved in phosphate import. Responsible for energy coupling to the transport system. The protein is Phosphate import ATP-binding protein PstB 3 of Natronomonas pharaonis (strain ATCC 35678 / DSM 2160 / CIP 103997 / JCM 8858 / NBRC 14720 / NCIMB 2260 / Gabara) (Halobacterium pharaonis).